The following is a 174-amino-acid chain: UBX domain-containing protein 5 (174 aa).

Residues 8–58 adopt a coiled-coil conformation; sequence QKEKFAEDRALLSQQNKEYAESLAKDIAKKEEKDKIRFEAEQKELRKKTIQ. Residues 74 to 120 enclose the UBX domain; that stretch reads RLLVRYPNGSRLILSFSPSQPMTSLFDAIILNPACPDYFSVRSVYPR.

In terms of assembly, forms a complex composed of deubiquitinating enzyme atx-3, adapter ubxn-5 and cdc-48.1. Interacts with atx-3 (via C-terminus). Interacts with cdc-48.1 (via N-terminus) and cdc-48.2. Specifically expressed in the germline.

In terms of biological role, probably acts as an adapter for ATPase cdc-48.1 and/or cdc-48.2, conferring substrate specificity. Unlike other UBX domain-containing protein does not bind 'Lys-48'-polyubiquitinated chain. This chain is UBX domain-containing protein 5, found in Caenorhabditis elegans.